A 113-amino-acid chain; its full sequence is U11-theraphotoxin-Hhn1a (113 aa).

Residues 1–21 (MNTVRVTFLLVFVLAVSLGQT) form the signal peptide. Positions 22–74 (DKDENRMEMQEKTEQGKSYLDFAENLLLQKLEELEAKLLEEDSEESRNSRQKR) are excised as a propeptide. 3 disulfides stabilise this stretch: Cys75/Cys90, Cys82/Cys95, and Cys89/Cys110.

This sequence belongs to the neurotoxin 14 (magi-1) family. 01 (HNTX-16) subfamily. In terms of tissue distribution, expressed by the venom gland.

Its subcellular location is the secreted. Functionally, probable ion channel inhibitor. The polypeptide is U11-theraphotoxin-Hhn1a (Cyriopagopus hainanus (Chinese bird spider)).